A 1099-amino-acid chain; its full sequence is Carbamoyl phosphate synthase large chain (1099 aa).

The interval 1-402 (MPKREDIKRI…ALGKALRSLE (402 aa)) is carboxyphosphate synthetic domain. Positions 129, 169, 175, 176, 208, 210, 215, 241, 242, 243, 285, and 299 each coordinate ATP. The 196-residue stretch at 133 to 328 (KETMEKAGLE…IAKVAALLAV (196 aa)) folds into the ATP-grasp 1 domain. Residues Q285, E299, and N301 each coordinate Mg(2+). Positions 285, 299, and 301 each coordinate Mn(2+). The interval 403–541 (LDAAPKLDLE…STYNGVENEA (139 aa)) is oligomerization domain. The segment at 542–944 (VPSDREKIMI…AFAKAQIAAG (403 aa)) is carbamoyl phosphate synthetic domain. An ATP-grasp 2 domain is found at 666 to 857 (AKLLKQIGLK…VARIAAKIMV (192 aa)). Positions 702, 741, 743, 748, 773, 774, 775, 776, 816, and 828 each coordinate ATP. Mg(2+) is bound by residues Q816, E828, and N830. Q816, E828, and N830 together coordinate Mn(2+). The MGS-like domain maps to 945–1099 (NPLPTTGAIL…VRRLTDTWKM (155 aa)). Residues 945 to 1099 (NPLPTTGAIL…VRRLTDTWKM (155 aa)) form an allosteric domain region.

This sequence belongs to the CarB family. In terms of assembly, composed of two chains; the small (or glutamine) chain promotes the hydrolysis of glutamine to ammonia, which is used by the large (or ammonia) chain to synthesize carbamoyl phosphate. Tetramer of heterodimers (alpha,beta)4. Mg(2+) serves as cofactor. It depends on Mn(2+) as a cofactor.

The enzyme catalyses hydrogencarbonate + L-glutamine + 2 ATP + H2O = carbamoyl phosphate + L-glutamate + 2 ADP + phosphate + 2 H(+). It catalyses the reaction hydrogencarbonate + NH4(+) + 2 ATP = carbamoyl phosphate + 2 ADP + phosphate + 2 H(+). It functions in the pathway amino-acid biosynthesis; L-arginine biosynthesis; carbamoyl phosphate from bicarbonate: step 1/1. It participates in pyrimidine metabolism; UMP biosynthesis via de novo pathway; (S)-dihydroorotate from bicarbonate: step 1/3. Large subunit of the glutamine-dependent carbamoyl phosphate synthetase (CPSase). CPSase catalyzes the formation of carbamoyl phosphate from the ammonia moiety of glutamine, carbonate, and phosphate donated by ATP, constituting the first step of 2 biosynthetic pathways, one leading to arginine and/or urea and the other to pyrimidine nucleotides. The large subunit (synthetase) binds the substrates ammonia (free or transferred from glutamine from the small subunit), hydrogencarbonate and ATP and carries out an ATP-coupled ligase reaction, activating hydrogencarbonate by forming carboxy phosphate which reacts with ammonia to form carbamoyl phosphate. In Thermotoga maritima (strain ATCC 43589 / DSM 3109 / JCM 10099 / NBRC 100826 / MSB8), this protein is Carbamoyl phosphate synthase large chain.